Here is a 154-residue protein sequence, read N- to C-terminus: Transcriptional repressor NrdR (154 aa).

A disordered region spans residues 1 to 22 (MRCPFCAHDDSQVKDSRPTDDG). Residues 3–34 (CPFCAHDDSQVKDSRPTDDGAAIRRRRQCEGC) fold into a zinc finger. Over residues 7–22 (AHDDSQVKDSRPTDDG) the composition is skewed to basic and acidic residues. In terms of domain architecture, ATP-cone spans 49–139 (MTVVKSDGRR…VYKDFREAKD (91 aa)).

It belongs to the NrdR family. Zn(2+) is required as a cofactor.

Its function is as follows. Negatively regulates transcription of bacterial ribonucleotide reductase nrd genes and operons by binding to NrdR-boxes. The protein is Transcriptional repressor NrdR of Rhizorhabdus wittichii (strain DSM 6014 / CCUG 31198 / JCM 15750 / NBRC 105917 / EY 4224 / RW1) (Sphingomonas wittichii).